A 475-amino-acid chain; its full sequence is uncharacterized protein (475 aa).

Residues 19–39 (IKVGVFFVAILLILTGILLTI) traverse the membrane as a helical segment. Disordered regions lie at residues 55–79 (GEYH…NATS) and 330–350 (SSPF…PHKG). Over residues 60–79 (LNTSPNENSTALQPDENATS) the composition is skewed to polar residues. The segment covering 336 to 348 (NRRHPVTGRIRPH) has biased composition (basic residues). Histidine 348 serves as a coordination point for Zn(2+).

The protein in the central section; belongs to the OapA family. It in the C-terminal section; belongs to the peptidase M23B family. Zn(2+) is required as a cofactor.

Its subcellular location is the cell membrane. This is an uncharacterized protein from Haemophilus influenzae (strain ATCC 51907 / DSM 11121 / KW20 / Rd).